The primary structure comprises 421 residues: UDP-N-acetylglucosamine 1-carboxyvinyltransferase (421 aa).

Position 22 to 23 (22 to 23 (KN)) interacts with phosphoenolpyruvate. Residue Arg93 coordinates UDP-N-acetyl-alpha-D-glucosamine. The active-site Proton donor is Cys117. The residue at position 117 (Cys117) is a 2-(S-cysteinyl)pyruvic acid O-phosphothioketal. UDP-N-acetyl-alpha-D-glucosamine-binding positions include 122–126 (RPVDL), Asp308, and Val330.

The protein belongs to the EPSP synthase family. MurA subfamily.

The protein localises to the cytoplasm. It catalyses the reaction phosphoenolpyruvate + UDP-N-acetyl-alpha-D-glucosamine = UDP-N-acetyl-3-O-(1-carboxyvinyl)-alpha-D-glucosamine + phosphate. The protein operates within cell wall biogenesis; peptidoglycan biosynthesis. Its function is as follows. Cell wall formation. Adds enolpyruvyl to UDP-N-acetylglucosamine. This Stutzerimonas stutzeri (strain A1501) (Pseudomonas stutzeri) protein is UDP-N-acetylglucosamine 1-carboxyvinyltransferase.